An 860-amino-acid chain; its full sequence is Protein argonaute-2 (860 aa).

Tyr2 bears the 3'-nitrotyrosine mark. The PAZ domain occupies 230 to 349 (PVIEFVCEVL…LPLEVCNIVA (120 aa)). An interaction with guide RNA region spans residues 312 to 317 (YFKDRH). Phosphoserine is present on Ser388. In terms of domain architecture, Piwi spans 518–819 (LVVVILPGKT…VAFRARYHLV (302 aa)). Positions 525–567 (GKTPVYAEVKRVGDTVLGMATQCVQMKNVQRTTPQTLSNLCLK) are interaction with guide RNA. The interaction with GW182 family members stretch occupies residues 588–591 (FQQP). Residue Asp598 coordinates a divalent metal cation. Residues 651–661 (LIQFYKSTRFK) are interaction with GW182 family members. Asp670 is a binding site for a divalent metal cation. At Pro701 the chain carries 4-hydroxyproline. Interaction with guide RNA regions lie at residues 710 to 711 (KR), 754 to 762 (HAGIQGTSR), and 791 to 813 (YVRC…VAFR). His808 is a binding site for a divalent metal cation. Ser825, Ser829, Ser832, and Ser835 each carry phosphoserine.

This sequence belongs to the argonaute family. Ago subfamily. As to quaternary structure, interacts with DICER1 through its Piwi domain and with TARBP2 during assembly of the RNA-induced silencing complex (RISC). Together, DICER1, AGO2 and TARBP2 constitute the trimeric RISC loading complex (RLC), or micro-RNA (miRNA) loading complex (miRLC). Within the RLC/miRLC, DICER1 and TARBP2 are required to process precursor miRNAs (pre-miRNAs) to mature miRNAs and then load them onto AGO2. AGO2 bound to the mature miRNA constitutes the minimal RISC and may subsequently dissociate from DICER1 and TARBP2. Note however that the term RISC has also been used to describe the trimeric RLC/miRLC. The formation of RISC complexes containing siRNAs rather than miRNAs appears to occur independently of DICER1. Interacts with AGO1. Also interacts with DDB1, DDX5, DDX6, DDX20, DHX30, DHX36, DDX47, DHX9, ELAVL, FXR1, GEMIN4, HNRNPF, IGF2BP1, ILF3, IMP8, MATR3, PABPC1, PRMT5, P4HA1, P4HB, RBM4, SART3, TNRC6A, TNRC6B, UPF1 and YBX1. Interacts with the P-body components DCP1A and XRN1. Associates with polysomes and messenger ribonucleoproteins (mNRPs). Interacts with RBM4; the interaction is modulated under stress-induced conditions, occurs under both cell proliferation and differentiation conditions and in an RNA- and phosphorylation-independent manner. Interacts with LIMD1, WTIP and AJUBA. Interacts with TRIM71; the interaction increases in presence of RNA. Interacts with APOBEC3G in an RNA-dependent manner. Interacts with APOBEC3A, APOBEC3C, APOBEC3F and APOBEC3H. Interacts with DICER1, TARBP2, EIF6, MOV10 and RPL7A (60S ribosome subunit); they form a large RNA-induced silencing complex (RISC). Interacts with FMR1. Interacts with ZFP36. Interacts with RC3H1; the interaction is RNA independent. Found in a complex, composed of AGO2, CHD7 and ARB2A. Interacts with SND1 and SYT11. Interacts with CLNK. Interacts with GARRE1. Interacts with GRB2; this interaction is important for the formation of a ternary complex containing GRB2, AGO2 and DICER1. It depends on Mg(2+) as a cofactor. Mn(2+) is required as a cofactor. Post-translationally, hydroxylated. 4-hydroxylation appears to enhance protein stability but is not required for miRNA-binding or endonuclease activity. Ubiquitinated on surface-exposed lysines by a SCF-like E3 ubiquitin-protein ligase complex containing ZSWIM8 during target-directed microRNA degradation (TDMD), a process that mediates degradation of microRNAs (miRNAs). Ubiquitination by the SCF-like E3 ubiquitin-protein ligase complex containing ZSWIM8 leads to its subsequent degradation, thereby exposing miRNAs for degradation. ZSWIM8 recognizes and binds AGO2 when it is engaged with a TDMD target. In terms of processing, phosphorylation at Ser-388 by AKT3; leads to up-regulate translational repression of microRNA target and down-regulate endonucleolytic cleavage. Post-translationally, a phosphorylation cycle of C-terminal serine cluster (Ser-825-Ser-835) regulates the release of target mRNAs. Target-binding leads to phosphorylation of these residues by CSNK1A1, which reduces the affinity of AGO2 for mRNA and enables target release. The ANKRD52-PPP6C phosphatase complex dephosphorylates the residues, which primes AGO2 for binding a new target.

The protein resides in the cytoplasm. It is found in the P-body. Its subcellular location is the nucleus. The enzyme catalyses Endonucleolytic cleavage to 5'-phosphomonoester.. Its function is as follows. Required for RNA-mediated gene silencing (RNAi) by the RNA-induced silencing complex (RISC). The 'minimal RISC' appears to include AGO2 bound to a short guide RNA such as a microRNA (miRNA) or short interfering RNA (siRNA). These guide RNAs direct RISC to complementary mRNAs that are targets for RISC-mediated gene silencing. The precise mechanism of gene silencing depends on the degree of complementarity between the miRNA or siRNA and its target. Binding of RISC to a perfectly complementary mRNA generally results in silencing due to endonucleolytic cleavage of the mRNA specifically by AGO2. Binding of RISC to a partially complementary mRNA results in silencing through inhibition of translation, and this is independent of endonuclease activity. May inhibit translation initiation by binding to the 7-methylguanosine cap, thereby preventing the recruitment of the translation initiation factor eIF4-E. May also inhibit translation initiation via interaction with EIF6, which itself binds to the 60S ribosomal subunit and prevents its association with the 40S ribosomal subunit. The inhibition of translational initiation leads to the accumulation of the affected mRNA in cytoplasmic processing bodies (P-bodies), where mRNA degradation may subsequently occur. In some cases RISC-mediated translational repression is also observed for miRNAs that perfectly match the 3' untranslated region (3'-UTR). Can also up-regulate the translation of specific mRNAs under certain growth conditions. Binds to the AU element of the 3'-UTR of the TNF (TNF-alpha) mRNA and up-regulates translation under conditions of serum starvation. Also required for transcriptional gene silencing (TGS), in which short RNAs known as antigene RNAs or agRNAs direct the transcriptional repression of complementary promoter regions. This Rattus norvegicus (Rat) protein is Protein argonaute-2 (Ago2).